Reading from the N-terminus, the 134-residue chain is ATP synthase epsilon chain (134 aa).

It belongs to the ATPase epsilon chain family. F-type ATPases have 2 components, CF(1) - the catalytic core - and CF(0) - the membrane proton channel. CF(1) has five subunits: alpha(3), beta(3), gamma(1), delta(1), epsilon(1). CF(0) has three main subunits: a, b and c.

The protein localises to the cellular thylakoid membrane. In terms of biological role, produces ATP from ADP in the presence of a proton gradient across the membrane. The chain is ATP synthase epsilon chain from Prochlorococcus marinus (strain MIT 9515).